The primary structure comprises 526 residues: Bifunctional purine biosynthesis protein PurH (526 aa).

Residues 1–148 enclose the MGS-like domain; it reads MQRPIIIRRA…KNYSNVVVVV (148 aa).

This sequence belongs to the PurH family.

It carries out the reaction (6R)-10-formyltetrahydrofolate + 5-amino-1-(5-phospho-beta-D-ribosyl)imidazole-4-carboxamide = 5-formamido-1-(5-phospho-D-ribosyl)imidazole-4-carboxamide + (6S)-5,6,7,8-tetrahydrofolate. The catalysed reaction is IMP + H2O = 5-formamido-1-(5-phospho-D-ribosyl)imidazole-4-carboxamide. Its pathway is purine metabolism; IMP biosynthesis via de novo pathway; 5-formamido-1-(5-phospho-D-ribosyl)imidazole-4-carboxamide from 5-amino-1-(5-phospho-D-ribosyl)imidazole-4-carboxamide (10-formyl THF route): step 1/1. It functions in the pathway purine metabolism; IMP biosynthesis via de novo pathway; IMP from 5-formamido-1-(5-phospho-D-ribosyl)imidazole-4-carboxamide: step 1/1. In Baumannia cicadellinicola subsp. Homalodisca coagulata, this protein is Bifunctional purine biosynthesis protein PurH.